The chain runs to 98 residues: Small ribosomal subunit protein uS17 (98 aa).

The segment at 1–21 (MADQKGPKYTPAAEKPRGRRK) is disordered. Lys96 is covalently cross-linked (Isoglutamyl lysine isopeptide (Lys-Gln) (interchain with Q-Cter in protein Pup)).

Belongs to the universal ribosomal protein uS17 family. In terms of assembly, part of the 30S ribosomal subunit.

One of the primary rRNA binding proteins, it binds specifically to the 5'-end of 16S ribosomal RNA. This chain is Small ribosomal subunit protein uS17 (rpsQ), found in Mycolicibacterium smegmatis (strain ATCC 700084 / mc(2)155) (Mycobacterium smegmatis).